A 1166-amino-acid polypeptide reads, in one-letter code: Serine-aspartate repeat-containing protein E (1166 aa).

The N-terminal stretch at 1–52 (MINRDNKKAITKKGMISNRLNKFSIRKYTVGTASILVGTTLIFGLGNQEAKA) is a signal peptide. A YSIRK-G/S signaling motif motif is present at residues 23 to 34 (FSIRKYTVGTAS). The interval 53–606 (AENTSTENAK…GDGTVKPEEK (554 aa)) is ligand binding A region. A disordered region spans residues 54–230 (ENTSTENAKQ…SKEELKNNPE (177 aa)). A compositionally biased stretch (basic and acidic residues) spans 61-75 (AKQDDATTSDNKEVV). Residues 77-90 (ETENNSTTENNSTN) are compositionally biased toward low complexity. The span at 92–108 (IKKETNTDSQPEAKKES) shows a compositional bias: basic and acidic residues. The segment covering 118 to 129 (NNVTATTETKPQ) has biased composition (polar residues). The segment covering 130–145 (NIEKENVKPSTDKTAT) has biased composition (basic and acidic residues). Residues 166-178 (TTKPSTSEPSTSE) are compositionally biased toward low complexity. Residues 179-212 (IQTKPTTPQESTNIENSQPQPTPSKVDNQVTDAT) show a composition bias toward polar residues. The segment covering 221 to 230 (SKEELKNNPE) has biased composition (basic and acidic residues). CNA-B domains follow at residues 607-719 (LYKI…YKEP), 720-829 (KYNL…YKTP), and 830-940 (KYSL…EEDT). The segment at 904–1141 (VTNTTEDDKD…TGSENNGSNN (238 aa)) is disordered. Acidic residues-rich tracts occupy residues 908–918 (TEDDKDADGGE) and 935–1105 (YFEE…DSDS). The LPXTG sorting signal signature appears at 1129-1133 (LPETG). A Pentaglycyl murein peptidoglycan amidated threonine modification is found at T1132. A propeptide spans 1133 to 1166 (GSENNGSNNATLFGGLFAALGSLLLFGRRKKQNK) (removed by sortase).

It belongs to the serine-aspartate repeat-containing protein (SDr) family. Interacts with host complement factor H/CFAH (via C-terminus). Interacts with host complement regulator C4BPA.

It is found in the secreted. It localises to the cell wall. In terms of biological role, cell surface-associated calcium-binding protein which plays an important role in adhesion and pathogenesis. Contributes to the resistance to killing by innate immune components in blood and thus attenuates bacterial clearance by interacting with host complement factor H/CFAH and modulating its activity. Inhibits also bacterial opsonization and killing by interacting with host complement regulator C4BPA and thus inhibiting classical complement pathway activation. This is Serine-aspartate repeat-containing protein E (sdrE) from Staphylococcus aureus (strain Newman).